Reading from the N-terminus, the 428-residue chain is Nucleoside diphosphate phosphatase ENTPD5 (428 aa).

Residues 1–24 (MATSWGTVFFMLVVSCVCSAVSHR) form the signal peptide. The Proton acceptor role is filled by glutamate 172. N-linked (GlcNAc...) asparagine glycosylation occurs at asparagine 232. Disulfide bonds link cysteine 272-cysteine 303 and cysteine 363-cysteine 377. A glycan (N-linked (GlcNAc...) asparagine) is linked at asparagine 368.

This sequence belongs to the GDA1/CD39 NTPase family. As to quaternary structure, monomer; active form. Homodimer; disulfide-linked. Homodimers are enzymatically inactive. Requires Ca(2+) as cofactor. It depends on Mg(2+) as a cofactor. N-glycosylated; high-mannose type. Glycosylation is not essential for enzymatic activity. Expressed in adult liver, kidney, prostate, testis and colon. Much weaker expression in other tissues.

The protein resides in the endoplasmic reticulum. It localises to the secreted. The catalysed reaction is a ribonucleoside 5'-diphosphate + H2O = a ribonucleoside 5'-phosphate + phosphate + H(+). The enzyme catalyses GDP + H2O = GMP + phosphate + H(+). It catalyses the reaction UDP + H2O = UMP + phosphate + H(+). It carries out the reaction IDP + H2O = IMP + phosphate + H(+). The catalysed reaction is CDP + H2O = CMP + phosphate + H(+). The enzyme catalyses ADP + H2O = AMP + phosphate + H(+). Its pathway is protein modification; protein glycosylation. Functionally, hydrolyzes nucleoside diphosphates with a preference for GDP, IDP and UDP compared to ADP and CDP. In the lumen of the endoplasmic reticulum, hydrolyzes UDP that acts as an end-product feedback inhibitor of the UDP-Glc:glycoprotein glucosyltransferases. UMP can be transported back by an UDP-sugar antiporter to the cytosol where it is consumed to regenerate UDP-glucose. Therefore, it positively regulates protein reglucosylation by clearing UDP from the ER lumen and by promoting the regeneration of UDP-glucose. Protein reglucosylation is essential to proper glycoprotein folding and quality control in the ER. The protein is Nucleoside diphosphate phosphatase ENTPD5 of Homo sapiens (Human).